Consider the following 770-residue polypeptide: POU domain, class 2, transcription factor 1 (770 aa).

Over residues Met1–Leu26 the composition is skewed to polar residues. 4 disordered regions span residues Met1–Val33, Leu68–Ala97, Val262–Asp285, and Leu357–Lys385. Over residues Asp80–Ala97 the composition is skewed to low complexity. Residues Val262–Pro272 are compositionally biased toward polar residues. Thr271 and Thr277 each carry phosphothreonine. A POU-specific domain is found at Glu281–Glu355. Ser284 carries the post-translational modification Phosphoserine. Positions Leu357–Pro372 are enriched in low complexity. Residues Arg382–Asn441 constitute a DNA-binding region (homeobox). Phosphoserine occurs at positions 388 and 451. The span at Thr519 to Pro580 shows a compositional bias: low complexity. The interval Thr519–Gln589 is disordered.

Belongs to the POU transcription factor family. Class-2 subfamily. As to quaternary structure, interacts with POU2AF1; the interaction increases POU2F1 transactivation activity. Interacts with NR3C1, AR, PGR and HCFC1. In terms of processing, phosphorylated by PRKDC. Ubiquitously expressed. However, isoforms 4 and 5 are only expressed in lymphocytes.

It localises to the nucleus. Functionally, transcription factor that binds to the octamer motif (5'-ATTTGCAT-3') and activates the promoters of the genes for some small nuclear RNAs (snRNA) and of genes such as those for histone H2B and immunoglobulins. Modulates transcription transactivation by NR3C1, AR and PGR. In Mus musculus (Mouse), this protein is POU domain, class 2, transcription factor 1 (Pou2f1).